Here is a 685-residue protein sequence, read N- to C-terminus: Potassium-transporting ATPase ATP-binding subunit (685 aa).

Helical transmembrane passes span 36-56, 68-88, 218-238, and 255-275; these read MFVVEVGFFVTILLTIFPSIF, LIVTIILFITVLFANFAESVA, IALNTILVSLTLIFLIVLVAL, and IALLVCLIPTTIGGLLSAIGI. The 4-aspartylphosphate intermediate role is filled by aspartate 306. ATP-binding positions include aspartate 343, glutamate 347, 375 to 382, and lysine 394; that span reads FTAQTRMS. Mg(2+)-binding residues include aspartate 517 and aspartate 521. 3 consecutive transmembrane segments (helical) span residues 587 to 607, 615 to 635, and 654 to 674; these read FAIIPAIFTIAIPKMQLMNIM, AILSALIFNAIIIPALIPIAM, and IVFGFGGIIVPFVGIKIIDMI.

It belongs to the cation transport ATPase (P-type) (TC 3.A.3) family. Type IA subfamily. As to quaternary structure, the system is composed of three essential subunits: KdpA, KdpB and KdpC.

It is found in the cell membrane. The enzyme catalyses K(+)(out) + ATP + H2O = K(+)(in) + ADP + phosphate + H(+). Functionally, part of the high-affinity ATP-driven potassium transport (or Kdp) system, which catalyzes the hydrolysis of ATP coupled with the electrogenic transport of potassium into the cytoplasm. This subunit is responsible for energy coupling to the transport system and for the release of the potassium ions to the cytoplasm. The protein is Potassium-transporting ATPase ATP-binding subunit of Clostridium acetobutylicum (strain ATCC 824 / DSM 792 / JCM 1419 / IAM 19013 / LMG 5710 / NBRC 13948 / NRRL B-527 / VKM B-1787 / 2291 / W).